We begin with the raw amino-acid sequence, 393 residues long: Putative N(4)-(beta-N-acetylglucosaminyl)-L-asparaginase GH22932 (393 aa).

The segment at 15 to 41 is disordered; the sequence is ALKPITNSSSDTITPNPNLITTSRGSS. Positions 19-41 are enriched in polar residues; the sequence is ITNSSSDTITPNPNLITTSRGSS. 2 cysteine pairs are disulfide-bonded: Cys-100–Cys-105 and Cys-199–Cys-215. Thr-246 (nucleophile) is an active-site residue. Substrate is bound by residues 274–277 and 297–300; these read RVGD and TGDG. A disulfide bridge connects residues Cys-357 and Cys-381.

This sequence belongs to the Ntn-hydrolase family. As to quaternary structure, heterotetramer of two alpha and two beta chains arranged as a dimer of alpha/beta heterodimers. Cleaved into an alpha and beta chain by autocatalysis; this activates the enzyme. The N-terminal residue of the beta subunit is responsible for the nucleophile hydrolase activity.

The catalysed reaction is N(4)-(beta-N-acetyl-D-glucosaminyl)-L-asparagine + H2O = N-acetyl-beta-D-glucosaminylamine + L-aspartate + H(+). Its function is as follows. Cleaves the GlcNAc-Asn bond which joins oligosaccharides to the peptide of asparagine-linked glycoproteins. This Drosophila grimshawi (Hawaiian fruit fly) protein is Putative N(4)-(beta-N-acetylglucosaminyl)-L-asparaginase GH22932.